Reading from the N-terminus, the 79-residue chain is MSSSLEITSFYSFIWTPHIGPLLFGIGLWFSMFKEPSHFCPCQHPHFVEVVIPCDSLSRSLRLRVIVLFLAIFFPLLNI.

This is an uncharacterized protein from Ovis aries (Sheep).